Here is a 209-residue protein sequence, read N- to C-terminus: MQQGHFTSNSYHSKTLNSSSLPVSSKFSHTNDPDVEGVDNDSFSKALCNKDLDPSSTIRSVISSLLDSLQDKALQQSPNTSLSKLLLEDQDFGSLWLSLSFIFCNYWQPAMLILDSKSIHPLPLTDGEVLHRWECEVDSNNKTTIDLKYWYCSCSQFSYNAFNSSRSFDEPMPKNEQETWGGRCLSHHPTICSHILAASILRACHNLVI.

The segment covering 1-30 (MQQGHFTSNSYHSKTLNSSSLPVSSKFSHT) has biased composition (polar residues). The disordered stretch occupies residues 1-33 (MQQGHFTSNSYHSKTLNSSSLPVSSKFSHTNDP). The SWIM-type zinc finger occupies 143-203 (TTIDLKYWYC…HILAASILRA (61 aa)).

In terms of assembly, interacts with rdl1, rlp1 and srs2.

It is found in the cytoplasm. The protein resides in the nucleus. The protein localises to the nucleoplasm. Functionally, involved in early stages of the homologous recombination repair (HRR) pathway of double-stranded DNA breaks arising during DNA replication or induced by DNA-damaging agents. This is Zinc finger SWIM domain-containing protein sws1 (sws1) from Schizosaccharomyces pombe (strain 972 / ATCC 24843) (Fission yeast).